We begin with the raw amino-acid sequence, 180 residues long: Hypoxanthine-guanine phosphoribosyltransferase (180 aa).

2 residues coordinate diphosphate: lysine 43 and glycine 44. Mg(2+) contacts are provided by glutamate 99 and aspartate 100. Aspartate 103 acts as the Proton acceptor in catalysis. Residues lysine 131, 152-153 (FV), and aspartate 159 contribute to the GMP site. Position 165 (arginine 165) interacts with diphosphate.

This sequence belongs to the purine/pyrimidine phosphoribosyltransferase family. Requires Mg(2+) as cofactor.

It localises to the cytoplasm. It carries out the reaction IMP + diphosphate = hypoxanthine + 5-phospho-alpha-D-ribose 1-diphosphate. It catalyses the reaction GMP + diphosphate = guanine + 5-phospho-alpha-D-ribose 1-diphosphate. It functions in the pathway purine metabolism; IMP biosynthesis via salvage pathway; IMP from hypoxanthine: step 1/1. Its pathway is purine metabolism; GMP biosynthesis via salvage pathway; GMP from guanine: step 1/1. Functionally, purine salvage pathway enzyme that catalyzes the transfer of the ribosyl-5-phosphate group from 5-phospho-alpha-D-ribose 1-diphosphate (PRPP) to the N9 position of the 6-oxopurines hypoxanthine and guanine to form the corresponding ribonucleotides IMP (inosine 5'-monophosphate) and GMP (guanosine 5'-monophosphate), with the release of PPi. The polypeptide is Hypoxanthine-guanine phosphoribosyltransferase (hprT) (Bacillus subtilis (strain 168)).